Here is a 331-residue protein sequence, read N- to C-terminus: Ketol-acid reductoisomerase (NADP(+)) (331 aa).

The KARI N-terminal Rossmann domain occupies alanine 2–threonine 182. NADP(+)-binding positions include tyrosine 25 to glutamine 28, serine 51, serine 53, and aspartate 83 to glutamine 86. Residue histidine 108 is part of the active site. Glycine 134 lines the NADP(+) pocket. One can recognise a KARI C-terminal knotted domain in the interval threonine 183–leucine 328. Aspartate 191, glutamate 195, glutamate 227, and glutamate 231 together coordinate Mg(2+). Serine 252 contacts substrate.

The protein belongs to the ketol-acid reductoisomerase family. It depends on Mg(2+) as a cofactor.

It catalyses the reaction (2R)-2,3-dihydroxy-3-methylbutanoate + NADP(+) = (2S)-2-acetolactate + NADPH + H(+). The catalysed reaction is (2R,3R)-2,3-dihydroxy-3-methylpentanoate + NADP(+) = (S)-2-ethyl-2-hydroxy-3-oxobutanoate + NADPH + H(+). It participates in amino-acid biosynthesis; L-isoleucine biosynthesis; L-isoleucine from 2-oxobutanoate: step 2/4. It functions in the pathway amino-acid biosynthesis; L-valine biosynthesis; L-valine from pyruvate: step 2/4. In terms of biological role, involved in the biosynthesis of branched-chain amino acids (BCAA). Catalyzes an alkyl-migration followed by a ketol-acid reduction of (S)-2-acetolactate (S2AL) to yield (R)-2,3-dihydroxy-isovalerate. In the isomerase reaction, S2AL is rearranged via a Mg-dependent methyl migration to produce 3-hydroxy-3-methyl-2-ketobutyrate (HMKB). In the reductase reaction, this 2-ketoacid undergoes a metal-dependent reduction by NADPH to yield (R)-2,3-dihydroxy-isovalerate. This is Ketol-acid reductoisomerase (NADP(+)) from Nostoc sp. (strain PCC 7120 / SAG 25.82 / UTEX 2576).